The chain runs to 178 residues: Crossover junction endodeoxyribonuclease RuvC (178 aa).

Catalysis depends on residues Asp-21, Glu-81, and His-154. Mg(2+)-binding residues include Asp-21, Glu-81, and His-154.

Belongs to the RuvC family. In terms of assembly, homodimer which binds Holliday junction (HJ) DNA. The HJ becomes 2-fold symmetrical on binding to RuvC with unstacked arms; it has a different conformation from HJ DNA in complex with RuvA. In the full resolvosome a probable DNA-RuvA(4)-RuvB(12)-RuvC(2) complex forms which resolves the HJ. Mg(2+) serves as cofactor.

It is found in the cytoplasm. It catalyses the reaction Endonucleolytic cleavage at a junction such as a reciprocal single-stranded crossover between two homologous DNA duplexes (Holliday junction).. In terms of biological role, the RuvA-RuvB-RuvC complex processes Holliday junction (HJ) DNA during genetic recombination and DNA repair. Endonuclease that resolves HJ intermediates. Cleaves cruciform DNA by making single-stranded nicks across the HJ at symmetrical positions within the homologous arms, yielding a 5'-phosphate and a 3'-hydroxyl group; requires a central core of homology in the junction. The consensus cleavage sequence is 5'-(A/T)TT(C/G)-3'. Cleavage occurs on the 3'-side of the TT dinucleotide at the point of strand exchange. HJ branch migration catalyzed by RuvA-RuvB allows RuvC to scan DNA until it finds its consensus sequence, where it cleaves and resolves the cruciform DNA. This is Crossover junction endodeoxyribonuclease RuvC from Treponema denticola (strain ATCC 35405 / DSM 14222 / CIP 103919 / JCM 8153 / KCTC 15104).